Consider the following 145-residue polypeptide: D-aminoacyl-tRNA deacylase (145 aa).

The Gly-cisPro motif, important for rejection of L-amino acids motif lies at 137 to 138 (GP).

This sequence belongs to the DTD family. Homodimer.

It is found in the cytoplasm. It carries out the reaction glycyl-tRNA(Ala) + H2O = tRNA(Ala) + glycine + H(+). The enzyme catalyses a D-aminoacyl-tRNA + H2O = a tRNA + a D-alpha-amino acid + H(+). In terms of biological role, an aminoacyl-tRNA editing enzyme that deacylates mischarged D-aminoacyl-tRNAs. Also deacylates mischarged glycyl-tRNA(Ala), protecting cells against glycine mischarging by AlaRS. Acts via tRNA-based rather than protein-based catalysis; rejects L-amino acids rather than detecting D-amino acids in the active site. By recycling D-aminoacyl-tRNA to D-amino acids and free tRNA molecules, this enzyme counteracts the toxicity associated with the formation of D-aminoacyl-tRNA entities in vivo and helps enforce protein L-homochirality. In Shewanella baltica (strain OS223), this protein is D-aminoacyl-tRNA deacylase.